The primary structure comprises 391 residues: Ferrochelatase (391 aa).

Residues histidine 196 and glutamate 281 each contribute to the Fe cation site.

It belongs to the ferrochelatase family.

The protein localises to the cytoplasm. It catalyses the reaction heme b + 2 H(+) = protoporphyrin IX + Fe(2+). It participates in porphyrin-containing compound metabolism; protoheme biosynthesis; protoheme from protoporphyrin-IX: step 1/1. Functionally, catalyzes the ferrous insertion into protoporphyrin IX. The protein is Ferrochelatase of Prochlorococcus marinus (strain MIT 9312).